The sequence spans 459 residues: Neuronal acetylcholine receptor subunit beta-2 (459 aa).

At 1–203 (LRSDFLLGPE…ITYDFVIKRK (203 aa)) the chain is on the extracellular side. N21 and N138 each carry an N-linked (GlcNAc...) asparagine glycan. An intrachain disulfide couples C125 to C139. Residues 204 to 228 (PLFYTINLIIPCVLITSLAILVFYL) form a helical membrane-spanning segment. Topologically, residues 229–235 (PSDCGEK) are cytoplasmic. The chain crosses the membrane as a helical span at residues 236 to 254 (VTLCMSVLLALTVFLLLIS). Topologically, residues 255–269 (KIVPPTSLAVPLIGK) are extracellular. The helical transmembrane segment at 270 to 291 (YLMFTMVLVTFSIVTSVCVLNV) threads the bilayer. Over 292–421 (HHRSPSTHYM…WKYVAMVIDR (130 aa)) the chain is Cytoplasmic. The chain crosses the membrane as a helical span at residues 422–440 (LFLWIFILVCVVGTLGLFV).

The protein belongs to the ligand-gated ion channel (TC 1.A.9) family. Acetylcholine receptor (TC 1.A.9.1) subfamily. Beta-2/CHRNB2 sub-subfamily. Neuronal AChR is a heteropentamer composed of two different types of subunits: alpha and beta. CHRNB2/Beta-2 subunit can be combined to CHRNA2/alpha-2, CHRNA3/alpha-3 or CHRNA4/alpha-4, CHRNA5/alpha-5, CHRNA6/alpha-6 and CHRNB3/beta-3 to give rise to functional receptors.

The protein localises to the synaptic cell membrane. The protein resides in the cell membrane. It carries out the reaction Ca(2+)(in) = Ca(2+)(out). It catalyses the reaction K(+)(in) = K(+)(out). The catalysed reaction is Na(+)(in) = Na(+)(out). Activated by a myriad of ligands such as acetylcholine, cytisine, nicotine, choline and epibatidine. nAChR activity is inhibited by the antagonist alpha-conotoxins BuIA, PnIA, PnIC, GID and MII, small disulfide-constrained peptides from cone snails. Component of neuronal acetylcholine receptors (nAChRs) that function as pentameric, ligand-gated cation channels with high calcium permeability among other activities. nAChRs are excitatory neurotrasnmitter receptors formed by a collection of nAChR subunits known to mediate synaptic transmission in the nervous system and the neuromuscular junction. Each nAchR subunit confers differential attributes to channel properties, including activation, deactivation and desensitization kinetics, pH sensitivity, cation permeability, and binding to allosteric modulators. CHRNB2 forms heteropentameric neuronal acetylcholine receptors with CHRNA2, CHRNA3, CHRNA4 and CHRNA6, as well as CHRNA5 and CHRNB3 as accesory subunits. This is Neuronal acetylcholine receptor subunit beta-2 (chrnb2) from Carassius auratus (Goldfish).